Here is a 259-residue protein sequence, read N- to C-terminus: Dickkopf-related protein 2 (259 aa).

Positions 1–33 (MAALMRVKDSSRCLLLLAAVLMVESSQLGSSRA) are cleaved as a signal peptide. The segment at 42 to 70 (LGGETPAQSANRSAGMNQGLAFGGSKKGK) is disordered. Residues 47 to 57 (PAQSANRSAGM) are compositionally biased toward polar residues. N-linked (GlcNAc...) asparagine glycosylation is present at Asn52. The interval 78–127 (CSSDKECEVGRYCHSPHQGSSACMLCRRKKKRCHRDGMCCPGTRCNNGIC) is DKK-type Cys-1. 5 disulfide bridges follow: Cys183–Cys195, Cys189–Cys204, Cys194–Cys231, Cys214–Cys239, and Cys233–Cys256. Residues 183–256 (CLRSSDCIDG…YSSKARLHVC (74 aa)) form a DKK-type Cys-2 region.

Belongs to the dickkopf family. As to quaternary structure, interacts with LRP5 and LRP6. May be proteolytically processed by a furin-like protease.

It is found in the secreted. Functionally, antagonizes canonical Wnt signaling by inhibiting LRP5/6 interaction with Wnt and by forming a ternary complex with the transmembrane protein KREMEN that promotes internalization of LRP5/6. DKKs play an important role in vertebrate development, where they locally inhibit Wnt regulated processes such as antero-posterior axial patterning, limb development, somitogenesis and eye formation. In the adult, Dkks are implicated in bone formation and bone disease, cancer and Alzheimer disease. This chain is Dickkopf-related protein 2, found in Mus musculus (Mouse).